The primary structure comprises 179 residues: Interleukin-10 (179 aa).

An N-terminal signal peptide occupies residues 1 to 19 (MPSSSALLCCLVFLAGVAA). 2 disulfides stabilise this stretch: Cys-31-Cys-127 and Cys-81-Cys-133. N-linked (GlcNAc...) asparagine glycosylation occurs at Asn-135.

The protein belongs to the IL-10 family. Homodimer. Interacts with IL10RA and IL10RB.

It is found in the secreted. Its function is as follows. Major immune regulatory cytokine that acts on many cells of the immune system where it has profound anti-inflammatory functions, limiting excessive tissue disruption caused by inflammation. Mechanistically, IL10 binds to its heterotetrameric receptor comprising IL10RA and IL10RB leading to JAK1 and STAT2-mediated phosphorylation of STAT3. In turn, STAT3 translocates to the nucleus where it drives expression of anti-inflammatory mediators. Targets antigen-presenting cells (APCs) such as macrophages and monocytes and inhibits their release of pro-inflammatory cytokines including granulocyte-macrophage colony-stimulating factor /GM-CSF, granulocyte colony-stimulating factor/G-CSF, IL-1 alpha, IL-1 beta, IL-6, IL-8 and TNF-alpha. Also interferes with antigen presentation by reducing the expression of MHC-class II and co-stimulatory molecules, thereby inhibiting their ability to induce T cell activation. In addition, controls the inflammatory response of macrophages by reprogramming essential metabolic pathways including mTOR signaling. This Bubalus carabanensis (Swamp type water buffalo) protein is Interleukin-10 (IL10).